The sequence spans 353 residues: Heat-inducible transcription repressor HrcA (353 aa).

Belongs to the HrcA family.

In terms of biological role, negative regulator of class I heat shock genes (grpE-dnaK-dnaJ and groELS operons). Prevents heat-shock induction of these operons. The chain is Heat-inducible transcription repressor HrcA from Synechococcus elongatus (strain ATCC 33912 / PCC 7942 / FACHB-805) (Anacystis nidulans R2).